The sequence spans 302 residues: Bifunctional protein FolD (302 aa).

NADP(+)-binding positions include 171–173, Ser-196, and Ile-237; that span reads GRS.

Belongs to the tetrahydrofolate dehydrogenase/cyclohydrolase family. Homodimer.

It catalyses the reaction (6R)-5,10-methylene-5,6,7,8-tetrahydrofolate + NADP(+) = (6R)-5,10-methenyltetrahydrofolate + NADPH. It carries out the reaction (6R)-5,10-methenyltetrahydrofolate + H2O = (6R)-10-formyltetrahydrofolate + H(+). It functions in the pathway one-carbon metabolism; tetrahydrofolate interconversion. Its function is as follows. Catalyzes the oxidation of 5,10-methylenetetrahydrofolate to 5,10-methenyltetrahydrofolate and then the hydrolysis of 5,10-methenyltetrahydrofolate to 10-formyltetrahydrofolate. This is Bifunctional protein FolD from Sphingopyxis alaskensis (strain DSM 13593 / LMG 18877 / RB2256) (Sphingomonas alaskensis).